The primary structure comprises 888 residues: G-protein coupled receptor family C group 6 member A (888 aa).

A signal peptide spans 1–15 (MALLMTCFVIVFAAS). The Extracellular segment spans residues 16–568 (QPCQTPDDLV…KEMEYLDSLA (553 aa)). 4 N-linked (GlcNAc...) asparagine glycosylation sites follow: asparagine 251, asparagine 322, asparagine 532, and asparagine 544. Residues 569–589 (ILLLALSLLGILFVLAIGIIF) form a helical membrane-spanning segment. At 590–604 (TRNLNTPVVKSSGEL) the chain is on the cytoplasmic side. A helical transmembrane segment spans residues 605 to 625 (MVRYVILFCHFLNFAGTGFFI). The Extracellular portion of the chain corresponds to 626-641 (REPQSFTCKTRQTLIC). Residues 642 to 662 (MSFTLCISYILMKSLKILLAF) traverse the membrane as a helical segment. At 663–676 (SSKLQNFLKCFYKP) the chain is on the cytoplasmic side. Residues 677 to 697 (IPIIFTCTGIVVVCTLLIFAA) form a helical membrane-spanning segment. Residues 698–718 (PAVGQNVSLPRVIIFECEEGS) lie on the Extracellular side of the membrane. A helical transmembrane segment spans residues 719-739 (ILAFGSMLGYAAILAFMCFIC). Topologically, residues 740-754 (AFKGRKFPENYNEAK) are cytoplasmic. Residues 755-775 (FITFGMLIYFIAWITFIPIYT) form a helical membrane-spanning segment. Over 776 to 779 (FGKY) the chain is Extracellular. A helical membrane pass occupies residues 780 to 800 (MLVVEIIIILISNYGICCMFF). The Cytoplasmic portion of the chain corresponds to 801 to 888 (PKCYVILSKQ…ALPPKRISSI (88 aa)).

Belongs to the G-protein coupled receptor 3 family. In terms of assembly, homodimer; disulfide-linked.

The protein resides in the cell membrane. Functionally, receptor activated by multiple ligands, including osteocalcin (BGLAP), basic amino acids, and various cations. Activated by amino acids with a preference for basic amino acids such as L-Lys, L-Arg and L-ornithine but also by small and polar amino acids. The L-alpha amino acids respond is augmented by divalent cations Ca(2+) and Mg(2+). Seems to act through a G(q)/G(11) and G(i)-coupled pathway. Regulates testosterone production by acting as a ligand for uncarboxylated osteocalcin hormone: osteocalcin-binding at the surface of Leydig cells initiates a signaling response that promotes the expression of enzymes required for testosterone synthesis in a CREB-dependent manner. Mediates the non-genomic effects of androgens in multiple tissue. May coordinate nutritional and hormonal anabolic signals through the sensing of extracellular amino acids, osteocalcin, divalent ions and its responsiveness to anabolic steroids. This chain is G-protein coupled receptor family C group 6 member A (GPRC6A), found in Bos taurus (Bovine).